The chain runs to 214 residues: Pyrrolidone-carboxylate peptidase (214 aa).

Active-site residues include E78, C141, and H165.

Belongs to the peptidase C15 family. Homotetramer.

It is found in the cytoplasm. It catalyses the reaction Release of an N-terminal pyroglutamyl group from a polypeptide, the second amino acid generally not being Pro.. Its function is as follows. Removes 5-oxoproline from various penultimate amino acid residues except L-proline. In Streptococcus pneumoniae (strain 70585), this protein is Pyrrolidone-carboxylate peptidase.